A 763-amino-acid polypeptide reads, in one-letter code: Phosphoglycerol transferase I (763 aa).

Helical transmembrane passes span 1-21, 26-46, 77-97, and 108-128; these read MSEL…AWKA, WWFA…ITLF, ILPG…LGWI, and FGYS…SPAF.

It belongs to the OpgB family.

It localises to the cell inner membrane. It carries out the reaction a phosphatidylglycerol + a membrane-derived-oligosaccharide D-glucose = a 1,2-diacyl-sn-glycerol + a membrane-derived-oligosaccharide 6-(glycerophospho)-D-glucose.. The protein operates within glycan metabolism; osmoregulated periplasmic glucan (OPG) biosynthesis. Its function is as follows. Transfers a phosphoglycerol residue from phosphatidylglycerol to the membrane-bound nascent glucan backbones. The sequence is that of Phosphoglycerol transferase I from Escherichia coli O17:K52:H18 (strain UMN026 / ExPEC).